A 262-amino-acid polypeptide reads, in one-letter code: 3-methyl-2-oxobutanoate hydroxymethyltransferase (262 aa).

Residues aspartate 44 and aspartate 83 each coordinate Mg(2+). Residues 44–45 (DS), aspartate 83, and lysine 111 each bind 3-methyl-2-oxobutanoate. Mg(2+) is bound at residue glutamate 113. Glutamate 180 (proton acceptor) is an active-site residue.

Belongs to the PanB family. In terms of assembly, homodecamer; pentamer of dimers. Requires Mg(2+) as cofactor.

It is found in the cytoplasm. It catalyses the reaction 3-methyl-2-oxobutanoate + (6R)-5,10-methylene-5,6,7,8-tetrahydrofolate + H2O = 2-dehydropantoate + (6S)-5,6,7,8-tetrahydrofolate. It functions in the pathway cofactor biosynthesis; (R)-pantothenate biosynthesis; (R)-pantoate from 3-methyl-2-oxobutanoate: step 1/2. Its function is as follows. Catalyzes the reversible reaction in which hydroxymethyl group from 5,10-methylenetetrahydrofolate is transferred onto alpha-ketoisovalerate to form ketopantoate. The polypeptide is 3-methyl-2-oxobutanoate hydroxymethyltransferase (Alcanivorax borkumensis (strain ATCC 700651 / DSM 11573 / NCIMB 13689 / SK2)).